Here is a 321-residue protein sequence, read N- to C-terminus: Cytochrome c biogenesis protein CcsA (321 aa).

Transmembrane regions (helical) follow at residues 17 to 37, 48 to 68, 71 to 91, 98 to 118, 143 to 163, 225 to 245, 259 to 273, and 286 to 306; these read VVSI…FVGL, TFFC…HLPI, LYES…VPYF, LSTI…WGLL, MVSG…LLVI, ILSI…VWAN, TWAF…IYFH, and AIVA…VNLL.

The protein belongs to the CcmF/CycK/Ccl1/NrfE/CcsA family. In terms of assembly, may interact with Ccs1.

Its subcellular location is the plastid. It localises to the chloroplast thylakoid membrane. Functionally, required during biogenesis of c-type cytochromes (cytochrome c6 and cytochrome f) at the step of heme attachment. This Populus alba (White poplar) protein is Cytochrome c biogenesis protein CcsA.